Consider the following 195-residue polypeptide: Ribonuclease HII (195 aa).

The RNase H type-2 domain occupies Ser6–Asn195. Residues Asp12, Glu13, and Asp108 each contribute to the a divalent metal cation site.

This sequence belongs to the RNase HII family. Mn(2+) is required as a cofactor. The cofactor is Mg(2+).

Its subcellular location is the cytoplasm. It catalyses the reaction Endonucleolytic cleavage to 5'-phosphomonoester.. Its function is as follows. Endonuclease that specifically degrades the RNA of RNA-DNA hybrids. The polypeptide is Ribonuclease HII (Prochlorococcus marinus (strain NATL2A)).